Reading from the N-terminus, the 664-residue chain is E3 ubiquitin-protein ligase RNF139 (664 aa).

Ala2 bears the N-acetylalanine mark. Transmembrane regions (helical) follow at residues 51–71 (IVLQ…VLIL), 85–105 (AFLL…HIDF), 125–145 (SLWM…VTLL), 154–174 (LIIL…PLHI), 178–198 (LVFT…AVKL), 293–313 (GMSA…LAFI), 323–343 (LGFV…LSGL), 356–376 (MCLL…PVLM), 390–410 (FPVL…SYVL), 420–440 (LFAA…SLTV), 469–489 (SIIV…TMMF), and 495–512 (IRAF…YLQA). The segment at 547-586 (CAICYHEFTTSARITPCNHYFHALCLRKWLYIQDTCPMCH) adopts an RING-type; atypical zinc-finger fold. Polar residues predominate over residues 599 to 610 (SNVSNNNGFTPP). A disordered region spans residues 599–664 (SNVSNNNGFT…AAEEFNDDTD (66 aa)). Basic and acidic residues predominate over residues 616–628 (EAVREAAAESDRE). Over residues 629–639 (LNEDDSTDCDD) the composition is skewed to acidic residues. Ser634 carries the post-translational modification Phosphoserine. A phosphothreonine mark is found at Thr635 and Thr663.

Interacts with VHL. Interacts with MHC class I and HM13. Component of SCAP-SREBP complex composed of SREBF2, SCAP and RNF139; the complex hampers the interaction between SCAP and SEC24B, thereby reducing SREBF2 proteolytic processing. Interacts with SREBF2 (via C-terminal domain). Interacts with SCAP; the interaction inhibits the interaction of SCAP with SEC24B and hampering the ER to Golgi transport of the SCAP-SREBP complex. Interacts with SEC24B. Interacts with INSIG1 and INSIG2. Interacts with EIF3F and EIF3H; the interaction leads to protein translation inhibitions in a ubiquitination-dependent manner. Interacts with XBP1; the interaction induces ubiquitination and degradation of XBP1. Interacts with AUP1, AMFR and UBE2G2; interaction with AUP1 facilitates interaction of RNF139 with ubiquitin-conjugating enzyme UBE2G2 and ubiquitin ligase AMFR/gp78, leading to sterol-induced ubiquitination of HMGCR and its subsequent proteasomal degradation. In terms of processing, autoubiquitinated. Ubiquitination is induced by sterol and leads to ist degradation via the ubiquitin-proteasome pathway.

It is found in the endoplasmic reticulum membrane. It carries out the reaction S-ubiquitinyl-[E2 ubiquitin-conjugating enzyme]-L-cysteine + [acceptor protein]-L-lysine = [E2 ubiquitin-conjugating enzyme]-L-cysteine + N(6)-ubiquitinyl-[acceptor protein]-L-lysine.. It functions in the pathway protein modification; protein ubiquitination. E3-ubiquitin ligase; acts as a negative regulator of cell proliferation through mechanisms involving G2/M arrest and cell death. Required for MHC class I ubiquitination in cells expressing the cytomegalovirus protein US2 before dislocation from the endoplasmic reticulum (ER). Affects SREBP processing by hindering the SREBP-SCAP complex translocation from the ER to the Golgi, thereby reducing SREBF2 target gene expression. Involved in the sterol-accelerated degradation of HMGCR. This is achieved through binding to INSIG1 and/or INSIG2 at the ER membrane. In addition, interaction of RNF139 with AUP1 facilitates interaction of RNF139 with ubiquitin-conjugating enzyme UBE2G2 and ubiquitin ligase AMFR, leading to ubiquitination of HMGCR. The ubiquitinated HMGCR is then released from the ER by the complex into the cytosol for subsequent destruction. Required for INSIG1 ubiquitination. May be required for EIF3 complex ubiquitination. In Pongo abelii (Sumatran orangutan), this protein is E3 ubiquitin-protein ligase RNF139 (RNF139).